Here is a 188-residue protein sequence, read N- to C-terminus: Oleosin S2-2 (188 aa).

A2 carries the N-acetylalanine modification. Residues A2–A51 are polar. The next 3 membrane-spanning stretches (helical) occupy residues I49 to T69, V74 to A94, and I96 to L116. The tract at residues L52–Y125 is hydrophobic. The interval D164–T188 is disordered. Residues T172–P181 are compositionally biased toward polar residues.

It belongs to the oleosin family.

The protein localises to the lipid droplet. The protein resides in the membrane. May have a structural role to stabilize the lipid body during desiccation of the seed by preventing coalescence of the oil. Probably interacts with both lipid and phospholipid moieties of lipid bodies. May also provide recognition signals for specific lipase anchorage in lipolysis during seedling growth. The polypeptide is Oleosin S2-2 (S2) (Brassica napus (Rape)).